The sequence spans 425 residues: tRNA(Met) cytidine acetate ligase (425 aa).

Residues 7-20, glycine 102, asparagine 162, and 187-188 contribute to the ATP site; these read VVEY…HLHH and RI.

It belongs to the TmcAL family.

It localises to the cytoplasm. It carries out the reaction cytidine(34) in elongator tRNA(Met) + acetate + ATP = N(4)-acetylcytidine(34) in elongator tRNA(Met) + AMP + diphosphate. Functionally, catalyzes the formation of N(4)-acetylcytidine (ac(4)C) at the wobble position of elongator tRNA(Met), using acetate and ATP as substrates. First activates an acetate ion to form acetyladenylate (Ac-AMP) and then transfers the acetyl group to tRNA to form ac(4)C34. The polypeptide is tRNA(Met) cytidine acetate ligase (Fervidobacterium nodosum (strain ATCC 35602 / DSM 5306 / Rt17-B1)).